Reading from the N-terminus, the 496-residue chain is Bifunctional protein HldE (496 aa).

Residues 1–335 (MIKHNPPSPE…GALFRSHGPT (335 aa)) are ribokinase. An ATP-binding site is contributed by 211–214 (NRKE). Residue Asp280 is part of the active site. A cytidylyltransferase region spans residues 363–496 (FTNGCFDILH…IGKLRAGSTS (134 aa)).

The protein in the N-terminal section; belongs to the carbohydrate kinase PfkB family. In the C-terminal section; belongs to the cytidylyltransferase family. As to quaternary structure, homodimer.

The enzyme catalyses D-glycero-beta-D-manno-heptose 7-phosphate + ATP = D-glycero-beta-D-manno-heptose 1,7-bisphosphate + ADP + H(+). The catalysed reaction is D-glycero-beta-D-manno-heptose 1-phosphate + ATP + H(+) = ADP-D-glycero-beta-D-manno-heptose + diphosphate. The protein operates within nucleotide-sugar biosynthesis; ADP-L-glycero-beta-D-manno-heptose biosynthesis; ADP-L-glycero-beta-D-manno-heptose from D-glycero-beta-D-manno-heptose 7-phosphate: step 1/4. It functions in the pathway nucleotide-sugar biosynthesis; ADP-L-glycero-beta-D-manno-heptose biosynthesis; ADP-L-glycero-beta-D-manno-heptose from D-glycero-beta-D-manno-heptose 7-phosphate: step 3/4. Its function is as follows. Catalyzes the phosphorylation of D-glycero-D-manno-heptose 7-phosphate at the C-1 position to selectively form D-glycero-beta-D-manno-heptose-1,7-bisphosphate. In terms of biological role, catalyzes the ADP transfer from ATP to D-glycero-beta-D-manno-heptose 1-phosphate, yielding ADP-D-glycero-beta-D-manno-heptose. The protein is Bifunctional protein HldE of Mesorhizobium japonicum (strain LMG 29417 / CECT 9101 / MAFF 303099) (Mesorhizobium loti (strain MAFF 303099)).